The chain runs to 235 residues: TIR domain-containing adapter molecule 2 (235 aa).

Positions 1–39 (MGIGKSKINSCPLSLSWGKRHSVDTSPGYHESDSKKSED) are disordered. The N-myristoyl glycine moiety is linked to residue glycine 2. Serine 16 is subject to Phosphoserine; by PKC/PRKCE. The span at 30–39 (HESDSKKSED) shows a compositional bias: basic and acidic residues. A TIR domain is found at 73–229 (AEEEVFLKFV…TIWKETRNMV (157 aa)). A Phosphotyrosine modification is found at tyrosine 167.

In terms of assembly, homodimer. Interacts with TLR4, TICAM1, IRF3 and IRF7 in response to LPS. Interacts with IL1R1, IL1RAP, IRAK2, IRAK3 and TRAF6. Interacts with protein kinase-inactive mutants of IRAK1 and IRAK4. Isoform 1 interacts with isoform 2; the interaction occurs in late endosomes and disrupts the interaction between isoform 1 and TICAM1. Interacts with MYD88; the interaction decreases after IL-18 stimulation in a time-dependent manner. Interacts with IL18R1 and IL18RAP. Interacts with TLR2. Interacts with RAB11FIP2. Post-translationally, phosphorylated by PRKCE in response to LPS. Phosphorylation is essential for its function. It is depleted from the membrane upon phosphorylation. Tyrosine phosphorylation is inhibited by phosphatase PTPN4. Isoform 1 is myristoylated. Required for membrane association which is critical for its ability to initiate efficient signaling. As to expression, expressed in spleen, prostate, testis, uterus, small intestine, colon, peripheral blood leukocytes, heart, placenta, lung, liver, skeletal muscle, and pancreas Isoform 2 is ubiquitously expressed (at lower levels than isoform 1).

The protein resides in the cytoplasm. Its subcellular location is the golgi apparatus. It is found in the cell membrane. It localises to the endoplasmic reticulum. The protein localises to the early endosome membrane. The protein resides in the late endosome membrane. Its subcellular location is the cell projection. It is found in the phagocytic cup. Functionally, functions as a sorting adapter in different signaling pathways to facilitate downstream signaling leading to type I interferon induction. In TLR4 signaling, physically bridges TLR4 and TICAM1 and functionally transmits signal to TICAM1 in early endosomes after endocytosis of TLR4. In TLR2 signaling, physically bridges TLR2 and MYD88 and is required for the TLR2-dependent movement of MYD88 to endosomes following ligand engagement. Involved in IL-18 signaling and is proposed to function as a sorting adapter for MYD88 in IL-18 signaling during adaptive immune response. Forms a complex with RAB11FIP2 that is recruited to the phagosomes to promote the activation of the actin-regulatory GTPases RAC1 and CDC42 and subsequent phagocytosis of Gram-negative bacteria. In terms of biological role, proposed to inhibit LPS-TLR4 signaling at the late endosome by interaction with isoform 1 thereby disrupting the association of isoform 1 with TICAM1. May be involved in TLR4 degradation in late endosomes. The protein is TIR domain-containing adapter molecule 2 (TICAM2) of Homo sapiens (Human).